A 76-amino-acid polypeptide reads, in one-letter code: UPF0154 protein Sca_0984 (76 aa).

The chain crosses the membrane as a helical span at residues tryptophan 4–leucine 24.

It belongs to the UPF0154 family.

Its subcellular location is the cell membrane. The sequence is that of UPF0154 protein Sca_0984 from Staphylococcus carnosus (strain TM300).